We begin with the raw amino-acid sequence, 223 residues long: Probable Brix domain-containing ribosomal biogenesis protein (223 aa).

A Brix domain is found at 1–196; sequence MMLITTSHRP…IWIMEDGRRW (196 aa).

Probably involved in the biogenesis of the ribosome. The protein is Probable Brix domain-containing ribosomal biogenesis protein of Pyrococcus furiosus (strain ATCC 43587 / DSM 3638 / JCM 8422 / Vc1).